The sequence spans 659 residues: Putative cysteine-rich receptor-like protein kinase 39 (659 aa).

The N-terminal stretch at 1–27 (MGKYSVLMIFIASSLLIVLQNVEIVNA) is a signal peptide. Gnk2-homologous domains are found at residues 28–134 (VGCT…NHST) and 142–253 (PSVR…LYAF). The Extracellular portion of the chain corresponds to 28 to 289 (VGCTGSFFNG…KKKGRSIGYG (262 aa)). Residues Asn-38, Asn-64, Asn-122, Asn-131, Asn-157, Asn-170, Asn-259, and Asn-274 are each glycosylated (N-linked (GlcNAc...) asparagine). The chain crosses the membrane as a helical span at residues 290 to 310 (GIIAIVVVLTFINILVFIGYI). At 311–659 (KVYGRRKESY…DDVFTELSCR (349 aa)) the chain is on the cytoplasmic side. In terms of domain architecture, Protein kinase spans 353-619 (FSSENTLGQG…PTMSSVIIWL (267 aa)). ATP contacts are provided by residues 359–367 (LGQGGFGTV) and Lys-381. Tyr-426 bears the Phosphotyrosine mark. Catalysis depends on Asp-478, which acts as the Proton acceptor. Ser-482 is subject to Phosphoserine. Thr-518 is modified (phosphothreonine). Tyr-526 carries the post-translational modification Phosphotyrosine.

It belongs to the protein kinase superfamily. Ser/Thr protein kinase family. CRK subfamily.

Its subcellular location is the membrane. It catalyses the reaction L-seryl-[protein] + ATP = O-phospho-L-seryl-[protein] + ADP + H(+). The catalysed reaction is L-threonyl-[protein] + ATP = O-phospho-L-threonyl-[protein] + ADP + H(+). This is Putative cysteine-rich receptor-like protein kinase 39 (CRK39) from Arabidopsis thaliana (Mouse-ear cress).